A 663-amino-acid chain; its full sequence is Polyunsaturated fatty acid lipoxygenase ALOX15 (663 aa).

The PLAT domain maps to glycine 2 to cysteine 115. Positions threonine 116–isoleucine 663 constitute a Lipoxygenase domain. Residues histidine 361, histidine 366, histidine 541, histidine 545, and isoleucine 663 each contribute to the Fe cation site.

It belongs to the lipoxygenase family. In terms of assembly, interacts with PEBP1; in response to IL13/interleukin-13, prevents the interaction of PEBP1 with RAF1 to activate the ERK signaling cascade. Requires Fe cation as cofactor. Found in pituitary and pineal glands as well as leukocytes, kidney, aorta, small intestine and cornea. Also expressed by resident peritoneal macrophages (at protein level).

Its subcellular location is the cytoplasm. It localises to the cytosol. The protein resides in the cell membrane. The protein localises to the lipid droplet. The catalysed reaction is (5Z,8Z,11Z,14Z)-eicosatetraenoate + O2 = (12S)-hydroperoxy-(5Z,8Z,10E,14Z)-eicosatetraenoate. It carries out the reaction (5Z,8Z,11Z,14Z)-eicosatetraenoate + O2 = (15S)-hydroperoxy-(5Z,8Z,11Z,13E)-eicosatetraenoate. The enzyme catalyses (9Z,12Z)-octadecadienoate + O2 = (13S)-hydroperoxy-(9Z,11E)-octadecadienoate. It catalyses the reaction (5Z,8Z,11Z,14Z)-eicosatetraenoate + 2 O2 = (14R,15S)-dihydroperoxy-(5Z,8Z,10E,12E)-eicosatetraenoate. The catalysed reaction is (5Z,8Z,11Z,14Z)-eicosatetraenoate + 2 O2 = (8S,15S)-dihydroperoxy-(5Z,9E,11Z,13E)-eicosatetraenoate. It carries out the reaction (14S,15R)-epoxy-(5Z,8Z,11Z)-eicosatrienoate + O2 = (8S)-hydroperoxy-(14S,15R)-epoxy-(5Z,9E,11Z)-eicosatrienoate. The enzyme catalyses (14S,15R)-epoxy-(5Z,8Z,11Z)-eicosatrienoate + O2 = (12S)-hydroperoxy-(14S,15R)-epoxy-(5Z,8Z,10E)-eicosatrienoate. It catalyses the reaction (14R,15S)-epoxy-(5Z,8Z,11Z)-eicosatrienoate + O2 = (5S)-hydroperoxy-(14R,15S)-epoxy-(6E,8Z,11Z)-eicosatrienoate. The catalysed reaction is (14R,15S)-epoxy-(5Z,8Z,11Z)-eicosatrienoate + O2 = (12S)-hydroperoxy-(14R,15S)-epoxy-(5Z,8Z,10E)-eicosatrienoate. It carries out the reaction (15R)-hydroperoxy-(5Z,8Z,11Z,13E)-eicosatetraenoate = 15-oxo-(5Z,8Z,11Z,13E)-eicosatetraenoate + H2O. The enzyme catalyses (15S)-hydroperoxy-(5Z,8Z,11Z,13E)-eicosatetraenoate = (14S,15S)-epoxy-(5Z,8Z,10E,12E)-eicosatetraenoate + H2O. It catalyses the reaction (12S)-hydroperoxy-(5Z,8Z,10E,14Z)-eicosatetraenoate = (8S)-hydroxy-(11S,12S)-epoxy-(5Z,9E,14Z)-eicosatrienoate. The catalysed reaction is (4Z,7Z,10Z,13Z,16Z)-docosapentaenoate + O2 = 14-hydroperoxy-(4Z,7Z,10Z,12E,16Z)-docosapentaenoate. It carries out the reaction (7Z,10Z,13Z,16Z,19Z)-docosapentaenoate + O2 = 14-hydroperoxy-(7Z,10Z,12E,16Z,19Z)-docosapentaenoate. The enzyme catalyses (4Z,7Z,10Z,13Z,16Z,19Z)-docosahexaenoate + O2 = (14S)-hydroperoxy-(4Z,7Z,10Z,12E,16Z,19Z)-docosahexaenoate. It catalyses the reaction (4Z,7Z,10Z,13Z,16Z,19Z)-docosahexaenoate + O2 = (17S)-hydroperoxy-(4Z,7Z,10Z,13Z,15E,19Z)-docosahexaenoate. The catalysed reaction is (7S)-hydroperoxy-(4Z,8E,10Z,13Z,16Z,19Z)-docosahexaenoate + O2 = (7S,14S)-dihydroperoxy-(4Z,8E,10Z,12E,16Z,19Z)-docosahexaenoate. It carries out the reaction (7S)-hydroperoxy-(4Z,8E,10Z,13Z,16Z,19Z)-docosahexaenoate + O2 = (7S,17S)-dihydroperoxy-(4Z,8E,10Z,13Z,15E,19Z)-docosahexaenoate. The enzyme catalyses (4Z,7Z,10Z,13Z,16Z,19Z)-docosahexaenoate + O2 = (11S)-hydroperoxy-(4Z,7Z,9E,13Z,16Z,19Z)-docosahexaenoate. It catalyses the reaction N-(5Z,8Z,11Z,14Z)-eicosatetraenoyl-taurine + O2 = N-(12S)-hydroperoxy-(5Z,8Z,10E,14Z)-eicosatetraenoyl-taurine. The catalysed reaction is N-(5Z,8Z,11Z,14Z)-eicosatetraenoyl-gamma-aminobutanoate + O2 = N-(12S)-hydroperoxy-(5Z,8Z,10E,14Z)-eicosatetraenoyl-gamma-aminobutanoate. It carries out the reaction N-(5Z,8Z,11Z,14Z)-eicosatetraenoyl-glycine + O2 = N-(12S)-hydroperoxy-(5Z,8Z,10E,14Z)-eicosatetraenoyl-glycine. The enzyme catalyses N-(5Z,8Z,11Z,14Z)-eicosatetraenoyl-L-alanine + O2 = N-(12S)-hydroperoxy-(5Z,8Z,10E,14Z)-eicosatetraenoyl-alanine. It catalyses the reaction N-(5Z,8Z,11Z,14Z)-eicosatetraenoyl-taurine + O2 = N-(15S)-hydroperoxy-(5Z,8Z,11Z,13E)-eicosatetraenoyl-taurine. The catalysed reaction is N-(5Z,8Z,11Z,14Z)-eicosatetraenoyl-gamma-aminobutanoate + O2 = N-(15S)-hydroperoxy-(5Z,8Z,11Z,13E)-eicosatetraenoyl-gamma-aminobutanoate. It carries out the reaction N-(5Z,8Z,11Z,14Z)-eicosatetraenoyl-glycine + O2 = N-(15S)-hydroperoxy-(5Z,8Z,11Z,13E)-eicosatetraenoyl-glycine. The enzyme catalyses N-(5Z,8Z,11Z,14Z)-eicosatetraenoyl-L-alanine + O2 = N-(15S)-hydroperoxy-(5Z,8Z,11Z,13E)-eicosatetraenoyl-alanine. It functions in the pathway lipid metabolism; hydroperoxy eicosatetraenoic acid biosynthesis. Functionally, non-heme iron-containing dioxygenase that catalyzes the stereo-specific peroxidation of free and esterified polyunsaturated fatty acids generating a spectrum of bioactive lipid mediators. It inserts peroxyl groups at C12 or C15 of arachidonate ((5Z,8Z,11Z,14Z)-eicosatetraenoate) producing both 12-hydroperoxyeicosatetraenoate/12-HPETE and 15-hydroperoxyeicosatetraenoate/15-HPETE. It may then act on 12-HPETE to produce hepoxilins, which may show pro-inflammatory properties. Can also peroxidize linoleate ((9Z,12Z)-octadecadienoate) to 13-hydroperoxyoctadecadienoate. May participate in the sequential oxidations of DHA ((4Z,7Z,10Z,13Z,16Z,19Z)-docosahexaenoate) to generate specialized pro-resolving mediators (SPMs)like resolvin D5 ((7S,17S)-diHPDHA) and (7S,14S)-diHPDHA, that actively down-regulate the immune response and have anti-aggregation properties with platelets. Can convert epoxy fatty acids to hydroperoxy-epoxides derivatives followed by an intramolecular nucleophilic substitution leading to the formation of monocyclic endoperoxides. Plays an important role during the maintenance of self-tolerance by peroxidizing membrane-bound phosphatidylethanolamine which can then signal the sorting process for clearance of apoptotic cells during inflammation and prevent an autoimmune response. In addition to its role in the immune and inflammatory responses, this enzyme may play a role in epithelial wound healing in the cornea through production of lipoxin A4 (LXA(4)) and docosahexaenoic acid-derived neuroprotectin D1 (NPD1; 10R,17S-HDHA), both lipid autacoids exhibit anti-inflammatory and neuroprotective properties. Furthermore, it may regulate actin polymerization which is crucial for several biological processes such as the phagocytosis of apoptotic cells. It is also implicated in the generation of endogenous ligands for peroxisome proliferator activated receptor (PPAR-gamma), hence modulating macrophage development and function. It may also exert a negative effect on skeletal development by regulating bone mass through this pathway. As well as participates in ER stress and downstream inflammation in adipocytes, pancreatic islets, and liver. Finally, it is also involved in the cellular response to IL13/interleukin-13. The sequence is that of Polyunsaturated fatty acid lipoxygenase ALOX15 from Mus musculus (Mouse).